The sequence spans 474 residues: Aspartyl/glutamyl-tRNA(Asn/Gln) amidotransferase subunit B (474 aa).

The protein belongs to the GatB/GatE family. GatB subfamily. Heterotrimer of A, B and C subunits.

It catalyses the reaction L-glutamyl-tRNA(Gln) + L-glutamine + ATP + H2O = L-glutaminyl-tRNA(Gln) + L-glutamate + ADP + phosphate + H(+). The enzyme catalyses L-aspartyl-tRNA(Asn) + L-glutamine + ATP + H2O = L-asparaginyl-tRNA(Asn) + L-glutamate + ADP + phosphate + 2 H(+). In terms of biological role, allows the formation of correctly charged Asn-tRNA(Asn) or Gln-tRNA(Gln) through the transamidation of misacylated Asp-tRNA(Asn) or Glu-tRNA(Gln) in organisms which lack either or both of asparaginyl-tRNA or glutaminyl-tRNA synthetases. The reaction takes place in the presence of glutamine and ATP through an activated phospho-Asp-tRNA(Asn) or phospho-Glu-tRNA(Gln). The sequence is that of Aspartyl/glutamyl-tRNA(Asn/Gln) amidotransferase subunit B from Limosilactobacillus reuteri (strain DSM 20016) (Lactobacillus reuteri).